Reading from the N-terminus, the 221-residue chain is MSETAPVAPAAPAPAEKTPVKKKAKKSGVAAGKRKASGPPVSELITKAVAASKERSGVSLAALKKALAAAGYDVEKNNSRIKLGLKSLVSKGTLVQTKGTGASGSFKLNKKAATGEAKPKGKKAGAAKPKKAAGAAKKPKKSTGAATPKKAAKKTPKKVKKPAAAAGTKKVAKSPKKAKAAKPKKPTKSPAKAKAPKPKAAKPKAAKPKATKAKKAVSKKK.

Residues 1–17 show a composition bias toward low complexity; that stretch reads MSETAPVAPAAPAPAEK. The segment at 1–42 is disordered; it reads MSETAPVAPAAPAPAEKTPVKKKAKKSGVAAGKRKASGPPVS. Ser2 carries the post-translational modification N-acetylserine. Ser2 bears the Phosphoserine mark. At Lys17 the chain carries N6-acetyllysine. Position 18 is a phosphothreonine (Thr18). Residues 20–36 show a composition bias toward basic residues; the sequence is VKKKAKKSGVAAGKRKA. N6-(beta-hydroxybutyryl)lysine occurs at positions 35 and 53. Positions 37 to 110 constitute an H15 domain; that stretch reads SGPPVSELIT…GASGSFKLNK (74 aa). Citrulline is present on Arg55. 3 positions are modified to N6-(beta-hydroxybutyryl)lysine: Lys65, Lys86, and Lys91. Positions 87 to 221 are disordered; that stretch reads SLVSKGTLVQ…KAKKAVSKKK (135 aa). Phosphoserine; by PKC is present on Ser105. N6-(beta-hydroxybutyryl)lysine is present on Lys107. Composition is skewed to basic residues over residues 120-141, 150-161, 170-187, and 194-221; these read KGKK…KPKK, KAAKKTPKKVKK, KVAK…KKPT, and KAPK…SKKK.

Belongs to the histone H1/H5 family. H1 histones are progressively phosphorylated during the cell cycle, becoming maximally phosphorylated during late G2 phase and M phase, and being dephosphorylated sharply thereafter. In terms of processing, citrullination at Arg-55 (H1R54ci) by PADI4 takes place within the DNA-binding site of H1 and results in its displacement from chromatin and global chromatin decondensation, thereby promoting pluripotency and stem cell maintenance.

Its subcellular location is the nucleus. It is found in the chromosome. Functionally, H1 histones bind to linker DNA between nucleosomes forming the macromolecular structure known as the chromatin fiber. H1 histones are necessary for the condensation of nucleosome chains into higher-order structured fibers. Also acts as a regulator of individual gene transcription through chromatin remodeling, nucleosome spacing and DNA methylation. This chain is Histone H1.3, found in Bos taurus (Bovine).